The following is a 199-amino-acid chain: Probable septum site-determining protein MinC (199 aa).

This sequence belongs to the MinC family. Interacts with MinD and FtsZ.

Functionally, cell division inhibitor that blocks the formation of polar Z ring septums. Rapidly oscillates between the poles of the cell to destabilize FtsZ filaments that have formed before they mature into polar Z rings. Prevents FtsZ polymerization. This chain is Probable septum site-determining protein MinC, found in Persephonella marina (strain DSM 14350 / EX-H1).